The primary structure comprises 79 residues: Cell division protein ZapB (79 aa).

Residues 3–79 (LEVFEKLEAK…QALLGRMEEV (77 aa)) adopt a coiled-coil conformation. Lys-8 carries the N6-acetyllysine modification. Residues 34–65 (NNSLSQEVQNAQHQREELERENNHLKEQQNGW) are disordered. A compositionally biased stretch (polar residues) spans 35-45 (NSLSQEVQNAQ). The span at 46–60 (HQREELERENNHLKE) shows a compositional bias: basic and acidic residues.

This sequence belongs to the ZapB family. Homodimer. The ends of the coiled-coil dimer bind to each other, forming polymers. Interacts with FtsZ.

It localises to the cytoplasm. Functionally, non-essential, abundant cell division factor that is required for proper Z-ring formation. It is recruited early to the divisome by direct interaction with FtsZ, stimulating Z-ring assembly and thereby promoting cell division earlier in the cell cycle. Its recruitment to the Z-ring requires functional FtsA or ZipA. The protein is Cell division protein ZapB of Shigella boydii serotype 18 (strain CDC 3083-94 / BS512).